The sequence spans 328 residues: Formyltetrahydrofolate deformylase 2, mitochondrial (328 aa).

A mitochondrion-targeting transit peptide spans 1-12 (MIRRVSTTSCLS). Residues 46–129 (FHVFHCPDVV…SVVRVPSLDP (84 aa)) enclose the ACT domain. The active site involves Asp-272.

This sequence belongs to the PurU family. In terms of tissue distribution, expressed in leaves, cotyledons, roots, seeds and flowers.

It is found in the mitochondrion. It carries out the reaction (6R)-10-formyltetrahydrofolate + H2O = (6S)-5,6,7,8-tetrahydrofolate + formate + H(+). Functionally, deformylase involved in photorespiration. Prevents excessive accumulation of 5-formyl tetrahydrofolate (THF), a potent inhibitor of the Gly decarboxylase/Ser hydroxymethyltransferase complex. The protein is Formyltetrahydrofolate deformylase 2, mitochondrial (PURU2) of Arabidopsis thaliana (Mouse-ear cress).